A 302-amino-acid polypeptide reads, in one-letter code: MSEPQPGLEPPQHGLYMLFLLVLVFFLMGLVGFMICHVLKKKGYRCRTSRGSEPDDAQLQPPEDDDVNEDTVERIVRCIIQNEANAEALKEMLGDSEGEGTVQLSSVDATSSLQDGAPSHHHTVHLGSAAPCIHCSRSKRPPLVRQGRSKEGKGRPRPGETTVFSVGRFRVTHIEKRYGLHEHRDGSPTDRSWGSGGGQEPGVSQVAGGQPRTGTAAIERLLPEPPPSQAAATHPVQNGRLKDASLVPCTLEGTPGTSAELNVGTRGTGPSPGLPSQEANGQPTKLDTSGQQDSLPPEAGGM.

The helical transmembrane segment at Leu-15–Ile-35 threads the bilayer. Disordered regions lie at residues Arg-47–Asn-68, Cys-135–Phe-164, Arg-177–Arg-212, and Val-247–Met-302. Position 52 is a phosphoserine (Ser-52). Composition is skewed to basic and acidic residues over residues Arg-148–Pro-158 and Arg-177–Pro-188. Over residues Gln-277 to Ser-294 the composition is skewed to polar residues.

Belongs to the RELT family. In terms of assembly, interacts with RELT, RELL1, OXSR1, PLSCR1 and TRAF2.

It localises to the cell membrane. Functionally, induces activation of MAPK14/p38 cascade, when overexpressed. Induces apoptosis, when overexpressed. The chain is RELT-like protein 2 (Rell2) from Rattus norvegicus (Rat).